We begin with the raw amino-acid sequence, 350 residues long: Farnesyl pyrophosphate synthase (350 aa).

Lys55, Arg58, and Gln94 together coordinate isopentenyl diphosphate. Mg(2+) is bound by residues Asp101 and Asp105. Residue Arg110 participates in dimethylallyl diphosphate binding. Arg111 lines the isopentenyl diphosphate pocket. The dimethylallyl diphosphate site is built by Lys198, Thr199, Gln237, Lys254, and Lys263.

This sequence belongs to the FPP/GGPP synthase family. Mg(2+) serves as cofactor.

Its subcellular location is the cytoplasm. It carries out the reaction isopentenyl diphosphate + dimethylallyl diphosphate = (2E)-geranyl diphosphate + diphosphate. The catalysed reaction is isopentenyl diphosphate + (2E)-geranyl diphosphate = (2E,6E)-farnesyl diphosphate + diphosphate. The protein operates within isoprenoid biosynthesis; farnesyl diphosphate biosynthesis; farnesyl diphosphate from geranyl diphosphate and isopentenyl diphosphate: step 1/1. Its pathway is isoprenoid biosynthesis; geranyl diphosphate biosynthesis; geranyl diphosphate from dimethylallyl diphosphate and isopentenyl diphosphate: step 1/1. Functionally, catalyzes the sequential condensation of isopentenyl pyrophosphate with the allylic pyrophosphates, dimethylallyl pyrophosphate, and then with the resultant geranylpyrophosphate to the ultimate product farnesyl pyrophosphate. In Zea mays (Maize), this protein is Farnesyl pyrophosphate synthase (FPS).